The chain runs to 385 residues: Interleukin-13 receptor subunit alpha-2 (385 aa).

The N-terminal stretch at 1-23 is a signal peptide; the sequence is MALMAVNTRCLCLFLLCTITGHS. Residues 24 to 336 are Extracellular-facing; that stretch reads LEIKVNPPQD…WEGYTGPDSK (313 aa). 3 Fibronectin type-III domains span residues 30-130, 133-221, and 236-334; these read PPQD…ADEG, GTKI…PIRS, and PPEF…TGPD. Residues Cys61 and Cys109 are joined by a disulfide bond. Asn111 carries N-linked (GlcNAc...) asparagine glycosylation. Residues Cys141 and Cys151 are joined by a disulfide bond. Residue Asn164 is glycosylated (N-linked (GlcNAc...) asparagine). A disulfide bridge links Cys180 with Cys193. N-linked (GlcNAc...) asparagine glycosylation is found at Asn211 and Asn295. Cysteines 265 and 312 form a disulfide. Positions 318–322 match the WSXWS motif motif; the sequence is WSEWS. Residues 337 to 357 form a helical membrane-spanning segment; it reads IVFIVPVCLFFIFLLLLLCLI. Topologically, residues 358–385 are cytoplasmic; that stretch reads VEKEDPEPTLSLHVDLNKEMYAYEETLC.

This sequence belongs to the type I cytokine receptor family. Type 5 subfamily. In terms of assembly, interacts with IL4RA. Interacts with high affinity to interleukin-13 (IL13), but not to interleukin-4 (IL4). Cleaved by MMP8 leading to a soluble form that is also able to interact with IL13.

It is found in the cell membrane. Functionally, cell surface receptor that plays a role in the regulation of IL-13-mediated responses. Functions as a decoy receptor that inhibits IL-13- and IL-4-mediated signal transduction via the JAK-STAT pathway and thereby modulates immune responses and inflammation. Serves as a functional signaling receptor for IL-13 in an alternative pathway involving AP-1 ultimately leading to the production of TGFB1. This Rattus norvegicus (Rat) protein is Interleukin-13 receptor subunit alpha-2 (Il13ra2).